A 245-amino-acid chain; its full sequence is Geranylgeranylglyceryl phosphate synthase (245 aa).

Residues D20 and S50 each contribute to the Mg(2+) site. Sn-glycerol 1-phosphate contacts are provided by residues 169-175, 202-203, and 224-225; these read YLEAGSG, GG, and GT.

It belongs to the GGGP/HepGP synthase family. Group II subfamily. Requires Mg(2+) as cofactor.

It localises to the cytoplasm. The enzyme catalyses sn-glycerol 1-phosphate + (2E,6E,10E)-geranylgeranyl diphosphate = sn-3-O-(geranylgeranyl)glycerol 1-phosphate + diphosphate. It participates in membrane lipid metabolism; glycerophospholipid metabolism. Its function is as follows. Prenyltransferase that catalyzes the transfer of the geranylgeranyl moiety of geranylgeranyl diphosphate (GGPP) to the C3 hydroxyl of sn-glycerol-1-phosphate (G1P). This reaction is the first ether-bond-formation step in the biosynthesis of archaeal membrane lipids. The protein is Geranylgeranylglyceryl phosphate synthase of Ignicoccus hospitalis (strain KIN4/I / DSM 18386 / JCM 14125).